Consider the following 278-residue polypeptide: MVNVIMKISSLKKGSNFSINIKNIKLDKKLLVAIIFLVLSILGGGAYLYYENEKTKKLEQARLQKIQKENSDKQTYLSDFKSAFEGLDYQALTGFYDVLRSDIDFFRVNNWLLDVMDCNVNCNLAFKRGSFDTFTYLEMNRNGAVIKPQFDQNKLQFANVDYISGFRSIYLKDLTEQERDKSENIIEQCSTKLSELYNLQLLMKEQVKFKINLPRNVTSISGYDWVKNSDIKFGSIEIENMPEKNLGLMKNIMNNSMMITSISLQNSSFKSKLNYYCY.

Residues 30 to 50 (LLVAIIFLVLSILGGGAYLYY) traverse the membrane as a helical segment.

The protein resides in the cell membrane. In terms of biological role, involved in TCP pilus biogenesis. The protein is Toxin coregulated pilus biosynthesis protein D (tcpD) of Vibrio cholerae serotype O1 (strain ATCC 39315 / El Tor Inaba N16961).